Consider the following 257-residue polypeptide: MNRITNLFQTQKDGILSVYFTAGYPNLNDTASILKALQAKGIHMVEVGIPFSDPMADGPVIQEAATQALRNGMSLHLLFGQLREIRSEVQIPIILMGYLNPIMQYGFEKFCASCVEAGVDGMIIPDLPYADYIADYKEIADRHDLKMIMLITPETSEERIRLIDAHTSGFIYMVSSAATTGAQQDFNEQKQAYFRRINAMNLQNPRLVGFGISNKATFEAAIAHSSGAIIGSKFVQLLKSEATPAEAVDKLLEALKQ.

Catalysis depends on proton acceptor residues Glu-46 and Asp-57.

Belongs to the TrpA family. In terms of assembly, tetramer of two alpha and two beta chains.

The catalysed reaction is (1S,2R)-1-C-(indol-3-yl)glycerol 3-phosphate + L-serine = D-glyceraldehyde 3-phosphate + L-tryptophan + H2O. It functions in the pathway amino-acid biosynthesis; L-tryptophan biosynthesis; L-tryptophan from chorismate: step 5/5. In terms of biological role, the alpha subunit is responsible for the aldol cleavage of indoleglycerol phosphate to indole and glyceraldehyde 3-phosphate. This is Tryptophan synthase alpha chain from Parabacteroides distasonis (strain ATCC 8503 / DSM 20701 / CIP 104284 / JCM 5825 / NCTC 11152).